Reading from the N-terminus, the 139-residue chain is Hydrogenase maturation factor HypA (139 aa).

Histidine 2 is a binding site for Ni(2+). Zn(2+) is bound by residues cysteine 73, cysteine 76, cysteine 110, and cysteine 113.

Belongs to the HypA/HybF family.

Functionally, involved in the maturation of [NiFe] hydrogenases. Required for nickel insertion into the metal center of the hydrogenase. The protein is Hydrogenase maturation factor HypA of Pyrococcus horikoshii (strain ATCC 700860 / DSM 12428 / JCM 9974 / NBRC 100139 / OT-3).